Consider the following 877-residue polypeptide: Leucine--tRNA ligase (877 aa).

A 'HIGH' region motif is present at residues 43 to 53 (PYPSGRIHMGH). The 'KMSKS' region signature appears at 628–632 (KMSKS). An ATP-binding site is contributed by Lys631.

Belongs to the class-I aminoacyl-tRNA synthetase family.

It localises to the cytoplasm. It catalyses the reaction tRNA(Leu) + L-leucine + ATP = L-leucyl-tRNA(Leu) + AMP + diphosphate. This chain is Leucine--tRNA ligase, found in Brucella suis biovar 1 (strain 1330).